Reading from the N-terminus, the 335-residue chain is Acetyl-coenzyme A carboxylase carboxyl transferase subunit alpha (335 aa).

Residues 40–294 (QLETLAARRR…KEAIEKHLNA (255 aa)) enclose the CoA carboxyltransferase C-terminal domain.

The protein belongs to the AccA family. In terms of assembly, acetyl-CoA carboxylase is a heterohexamer composed of biotin carboxyl carrier protein (AccB), biotin carboxylase (AccC) and two subunits each of ACCase subunit alpha (AccA) and ACCase subunit beta (AccD).

Its subcellular location is the cytoplasm. The enzyme catalyses N(6)-carboxybiotinyl-L-lysyl-[protein] + acetyl-CoA = N(6)-biotinyl-L-lysyl-[protein] + malonyl-CoA. It functions in the pathway lipid metabolism; malonyl-CoA biosynthesis; malonyl-CoA from acetyl-CoA: step 1/1. Functionally, component of the acetyl coenzyme A carboxylase (ACC) complex. First, biotin carboxylase catalyzes the carboxylation of biotin on its carrier protein (BCCP) and then the CO(2) group is transferred by the carboxyltransferase to acetyl-CoA to form malonyl-CoA. The chain is Acetyl-coenzyme A carboxylase carboxyl transferase subunit alpha from Prochlorococcus marinus (strain AS9601).